A 695-amino-acid chain; its full sequence is Segment polarity protein dishevelled homolog DVL-1 (695 aa).

The region spanning 1–85 (MAETKIIYHM…RVVSWLVLAE (85 aa)) is the DIX domain. The tract at residues 89 to 236 (SDAGSQGTDS…RLRQTDRASS (148 aa)) is disordered. Over residues 142-151 (SHRRERARRR) the composition is skewed to basic residues. Basic and acidic residues predominate over residues 152–171 (NRDEAARTNGHPRGDRRREL). Low complexity predominate over residues 177–192 (SASTVLSSELESSSFI). Residue S194 is modified to Phosphoserine. The span at 201-214 (SRLSSSTEQSTSSR) shows a compositional bias: low complexity. Over residues 215–228 (LIRKHKCRRRKQRL) the composition is skewed to basic residues. The PDZ domain occupies 251–323 (TVTLNMERHH…NDDAVRVLRE (73 aa)). Residues 425 to 499 (PDSGLEIRDR…SEQCYYVFGD (75 aa)) form the DEP domain. A compositionally biased stretch (low complexity) spans 551 to 580 (PAYQDPGFSYGSGSAGSQQSEGSKSSGSTR). The tract at residues 551-641 (PAYQDPGFSY…SQASAVAPGL (91 aa)) is disordered. Residues 622–635 (SQLSRGSSPRSQAS) are compositionally biased toward polar residues.

It belongs to the DSH family. Interacts with BRD7 and INVS. Interacts (via PDZ domain) with the VANGL1 and VANGL2 (via C-terminus). Interacts (via PDZ domain) with NXN. Interacts with CXXC4. Interacts with ARRB1; the interaction is enhanced by phosphorylation of DVL1. Interacts with CYLD. Interacts (via PDZ domain) with RYK. Self-associates (via DIX domain) and forms higher homooligomers. Interacts (via PDZ domain) with DACT1 and FZD7, where DACT1 and FZD7 compete for the same binding site. Interacts (via DEP domain) with MUSK; the interaction is direct and mediates the formation a DVL1, MUSK and PAK1 ternary complex involved in AChR clustering. Interacts (via PDZ domain) with TMEM88. Interacts with DCDC2. Interacts with FOXK2. Interacts with PKD1 (via extracellular domain). Interacts (via PDZ domain) with CCDC88C/DAPLE; competes with CCDC88C for binding to frizzled receptor FZD7 and dissociates from CCDC88C following initiation of non-canonical Wnt signaling when CCDC88C displaces DVL1 from ligand-activated FZD7. In terms of processing, ubiquitinated; undergoes both 'Lys-48'-linked ubiquitination, leading to its subsequent degradation by the ubiquitin-proteasome pathway, and 'Lys-63'-linked ubiquitination. The interaction with INVS is required for ubiquitination. Deubiquitinated by CYLD, which acts on 'Lys-63'-linked ubiquitin chains.

The protein resides in the cell membrane. The protein localises to the cytoplasm. It is found in the cytosol. Its subcellular location is the cytoplasmic vesicle. Its function is as follows. Participates in Wnt signaling by binding to the cytoplasmic C-terminus of frizzled family members and transducing the Wnt signal to down-stream effectors. Plays a role both in canonical and non-canonical Wnt signaling. Plays a role in the signal transduction pathways mediated by multiple Wnt genes. Required for LEF1 activation upon WNT1 and WNT3A signaling. DVL1 and PAK1 form a ternary complex with MUSK which is important for MUSK-dependent regulation of AChR clustering during the formation of the neuromuscular junction (NMJ). This Rattus norvegicus (Rat) protein is Segment polarity protein dishevelled homolog DVL-1 (Dvl1).